The chain runs to 156 residues: Small ribosomal subunit protein uS7 (156 aa).

It belongs to the universal ribosomal protein uS7 family. Part of the 30S ribosomal subunit. Contacts proteins S9 and S11.

Functionally, one of the primary rRNA binding proteins, it binds directly to 16S rRNA where it nucleates assembly of the head domain of the 30S subunit. Is located at the subunit interface close to the decoding center, probably blocks exit of the E-site tRNA. In Desulfovibrio desulfuricans (strain ATCC 27774 / DSM 6949 / MB), this protein is Small ribosomal subunit protein uS7.